The chain runs to 217 residues: Protein OPI10 homolog (217 aa).

This sequence belongs to the OPI10 family.

The chain is Protein OPI10 homolog from Dictyostelium discoideum (Social amoeba).